A 74-amino-acid polypeptide reads, in one-letter code: uncharacterized protein (74 aa).

To U.parvum UU416.

This is an uncharacterized protein from Mycoplasma pneumoniae (strain ATCC 29342 / M129 / Subtype 1) (Mycoplasmoides pneumoniae).